A 196-amino-acid polypeptide reads, in one-letter code: UMP-CMP kinase (196 aa).

Residue 13-18 (GAGKGT) coordinates ATP. At Ser-33 the chain carries Phosphoserine. Residues 33–63 (SAGELLRDERKNPDSQYGELIEKYIKDGKIV) form an NMP region. Residue Arg-39 participates in a ribonucleoside 5'-phosphate binding. An N6-acetyllysine mark is found at Lys-43 and Lys-55. Residues 61-63 (KIV) and 93-96 (GFPR) each bind a ribonucleoside 5'-phosphate. Asn-100 serves as a coordination point for CMP. Lys-106 bears the N6-succinyllysine mark. An LID region spans residues 133–143 (ERGKSSGRSDD). Arg-134 contributes to the ATP binding site. 2 residues coordinate a ribonucleoside 5'-phosphate: Arg-140 and Arg-151. Lys-179 serves as a coordination point for ATP. Ser-180 carries the post-translational modification Phosphoserine.

Belongs to the adenylate kinase family. UMP-CMP kinase subfamily. Monomer. It depends on Mg(2+) as a cofactor.

It localises to the nucleus. Its subcellular location is the cytoplasm. The enzyme catalyses CMP + ATP = CDP + ADP. The catalysed reaction is dCMP + ATP = dCDP + ADP. It catalyses the reaction UMP + ATP = UDP + ADP. It carries out the reaction a 2'-deoxyribonucleoside 5'-diphosphate + ATP = a 2'-deoxyribonucleoside 5'-triphosphate + ADP. The enzyme catalyses a ribonucleoside 5'-diphosphate + ATP = a ribonucleoside 5'-triphosphate + ADP. Catalyzes the phosphorylation of pyrimidine nucleoside monophosphates at the expense of ATP. Plays an important role in de novo pyrimidine nucleotide biosynthesis. Has preference for UMP and CMP as phosphate acceptors. Also displays broad nucleoside diphosphate kinase activity. In Bos taurus (Bovine), this protein is UMP-CMP kinase.